The sequence spans 63 residues: UPF0337 protein Atu0782 (63 aa).

Positions 1 to 63 are disordered; the sequence is MGSTSDKIAG…DAVKGAVDRM (63 aa). The span at 51-63 shows a compositional bias: basic and acidic residues; sequence KAKDAVKGAVDRM.

Belongs to the UPF0337 (CsbD) family.

The protein is UPF0337 protein Atu0782 of Agrobacterium fabrum (strain C58 / ATCC 33970) (Agrobacterium tumefaciens (strain C58)).